The following is a 130-amino-acid chain: Small ribosomal subunit protein uS8x (130 aa).

The protein belongs to the universal ribosomal protein uS8 family.

The sequence is that of Small ribosomal subunit protein uS8x (RPS15AD) from Arabidopsis thaliana (Mouse-ear cress).